The following is a 360-amino-acid chain: Glycerol-1-phosphate dehydrogenase [NAD(P)+] (360 aa).

NAD(+)-binding positions include 108–112 and 130–133; these read GRVID and TAAS. Position 135 (Asp-135) interacts with substrate. Ser-139 serves as a coordination point for NAD(+). Asp-182 is a binding site for substrate. The Zn(2+) site is built by Asp-182 and His-262. His-266 provides a ligand contact to substrate. Position 278 (His-278) interacts with Zn(2+).

Belongs to the glycerol-1-phosphate dehydrogenase family. Requires Zn(2+) as cofactor.

Its subcellular location is the cytoplasm. It catalyses the reaction sn-glycerol 1-phosphate + NAD(+) = dihydroxyacetone phosphate + NADH + H(+). The catalysed reaction is sn-glycerol 1-phosphate + NADP(+) = dihydroxyacetone phosphate + NADPH + H(+). The protein operates within membrane lipid metabolism; glycerophospholipid metabolism. In terms of biological role, catalyzes the NAD(P)H-dependent reduction of dihydroxyacetonephosphate (DHAP or glycerone phosphate) to glycerol 1-phosphate (G1P). The G1P thus generated is used as the glycerophosphate backbone of phospholipids in the cellular membranes of Archaea. The chain is Glycerol-1-phosphate dehydrogenase [NAD(P)+] from Methanoculleus marisnigri (strain ATCC 35101 / DSM 1498 / JR1).